The following is a 425-amino-acid chain: Orexin/Hypocretin receptor type 1 (425 aa).

The tract at residues 1-24 (MEPSATPGAQMGVPPGSREPSPVP) is disordered. Over 1-46 (MEPSATPGAQMGVPPGSREPSPVPPDYEDEFLRYLWRDYLYPKQYE) the chain is Extracellular. The tract at residues 26 to 41 (DYEDEFLRYLWRDYLY) is required for response to orexin-A. Residues 47–67 (WVLIAAYVAVFVVALVGNTLV) traverse the membrane as a helical segment. Over 68–82 (CLAVWRNHHMRTVTN) the chain is Cytoplasmic. Residues 83–105 (YFIVNLSLADVLVTAICLPASLL) traverse the membrane as a helical segment. The Extracellular segment spans residues 106–119 (VDITESWLFGHALC). C119 and C202 are disulfide-bonded. Residues 120–140 (KVIPYLQAVSVSVAVLTLSFI) traverse the membrane as a helical segment. Topologically, residues 141–160 (ALDRWYAICHPLLFKSTARR) are cytoplasmic. A helical membrane pass occupies residues 161–182 (ARGSILGIWAVSLAIMVPQAAV). The Extracellular segment spans residues 183–213 (MECSSVLPELANRTRLFSVCDERWADDLYPK). N-linked (GlcNAc...) asparagine glycosylation occurs at N194. Residues 214-235 (IYHSCFFIVTYLAPLGLMAMAY) form a helical membrane-spanning segment. Residues 236–298 (FQIFRKLWGR…QMRARRKTAK (63 aa)) are Cytoplasmic-facing. Residues 299–321 (MLMVVLLVFALCYLPISVLNVLK) form a helical membrane-spanning segment. Residue N318 coordinates suvorexant. Topologically, residues 322 to 336 (RVFGMFRQASDREAV) are extracellular. Residues 337-360 (YACFTFSHWLVYANSAANPIIYNF) traverse the membrane as a helical segment. Over 361–425 (LSGKFREQFK…VLTSVTTVLP (65 aa)) the chain is Cytoplasmic.

It belongs to the G-protein coupled receptor 1 family.

The protein localises to the cell membrane. Moderately selective excitatory receptor for orexin-A and, with a lower affinity, for orexin-B neuropeptide. Triggers an increase in cytoplasmic Ca(2+) levels in response to orexin-A binding. The polypeptide is Orexin/Hypocretin receptor type 1 (Homo sapiens (Human)).